The chain runs to 300 residues: Haloalkane dehalogenase (300 aa).

Residues 32–155 form the AB hydrolase-1 domain; that stretch reads AIVFQHGNPT…PAVRGVFQGF (124 aa). The Nucleophile role is filled by Asp-109. Glu-133 acts as the Proton donor in catalysis. Residue His-273 is the Proton acceptor of the active site.

This sequence belongs to the haloalkane dehalogenase family. Type 2 subfamily. In terms of assembly, monomer.

The catalysed reaction is 1-haloalkane + H2O = a halide anion + a primary alcohol + H(+). In terms of biological role, catalyzes hydrolytic cleavage of carbon-halogen bonds in halogenated aliphatic compounds, leading to the formation of the corresponding primary alcohols, halide ions and protons. The polypeptide is Haloalkane dehalogenase (Mycobacterium bovis (strain BCG / Pasteur 1173P2)).